Consider the following 527-residue polypeptide: Peptide chain release factor 3 (527 aa).

The tr-type G domain maps to 9-277; sequence AKRRTFAIIS…AVVNWAPKPL (269 aa). GTP contacts are provided by residues 18-25, 86-90, and 140-143; these read SHPDAGKT, DTPGH, and NKLD.

The protein belongs to the TRAFAC class translation factor GTPase superfamily. Classic translation factor GTPase family. PrfC subfamily.

The protein resides in the cytoplasm. Its function is as follows. Increases the formation of ribosomal termination complexes and stimulates activities of RF-1 and RF-2. It binds guanine nucleotides and has strong preference for UGA stop codons. It may interact directly with the ribosome. The stimulation of RF-1 and RF-2 is significantly reduced by GTP and GDP, but not by GMP. This chain is Peptide chain release factor 3, found in Pseudomonas savastanoi pv. phaseolicola (strain 1448A / Race 6) (Pseudomonas syringae pv. phaseolicola (strain 1448A / Race 6)).